Consider the following 370-residue polypeptide: GTPase Obg (370 aa).

The Obg domain maps to Met-1–Leu-159. A disordered region spans residues Asn-127–Pro-146. Positions Ala-160–Ala-334 constitute an OBG-type G domain. Residues Gly-166 to Ser-173, Phe-191 to Ala-195, Asp-213 to Gly-216, Asn-284 to Asp-287, and Ser-315 to Leu-317 each bind GTP. Mg(2+) is bound by residues Ser-173 and Thr-193.

The protein belongs to the TRAFAC class OBG-HflX-like GTPase superfamily. OBG GTPase family. As to quaternary structure, monomer. Mg(2+) is required as a cofactor.

It localises to the cytoplasm. In terms of biological role, an essential GTPase which binds GTP, GDP and possibly (p)ppGpp with moderate affinity, with high nucleotide exchange rates and a fairly low GTP hydrolysis rate. Plays a role in control of the cell cycle, stress response, ribosome biogenesis and in those bacteria that undergo differentiation, in morphogenesis control. The chain is GTPase Obg from Burkholderia lata (strain ATCC 17760 / DSM 23089 / LMG 22485 / NCIMB 9086 / R18194 / 383).